The primary structure comprises 95 residues: Integration host factor subunit beta (95 aa).

It belongs to the bacterial histone-like protein family. In terms of assembly, heterodimer of an alpha and a beta chain.

Functionally, this protein is one of the two subunits of integration host factor, a specific DNA-binding protein that functions in genetic recombination as well as in transcriptional and translational control. The chain is Integration host factor subunit beta from Erwinia tasmaniensis (strain DSM 17950 / CFBP 7177 / CIP 109463 / NCPPB 4357 / Et1/99).